Consider the following 239-residue polypeptide: Peptidase E (239 aa).

Catalysis depends on charge relay system residues serine 122, aspartate 137, and histidine 159.

This sequence belongs to the peptidase S51 family.

It is found in the cytoplasm. The catalysed reaction is Dipeptidase E catalyzes the hydrolysis of dipeptides Asp-|-Xaa. It does not act on peptides with N-terminal Glu, Asn or Gln, nor does it cleave isoaspartyl peptides.. Hydrolyzes dipeptides containing N-terminal aspartate residues. May play a role in allowing the cell to use peptide aspartate to spare carbon otherwise required for the synthesis of the aspartate family of amino acids. The polypeptide is Peptidase E (Shewanella baltica (strain OS195)).